The following is a 141-amino-acid chain: Hemoglobin subunit alpha (141 aa).

The Globin domain maps to 1–141 (VLSPADKTNV…VSTVLTSKYR (141 aa)). S3 is subject to Phosphoserine. The residue at position 7 (K7) is an N6-succinyllysine. T8 carries the post-translational modification Phosphothreonine. K11 carries the N6-succinyllysine modification. K16 bears the N6-acetyllysine; alternate mark. K16 carries the post-translational modification N6-succinyllysine; alternate. Position 24 is a phosphotyrosine (Y24). At S35 the chain carries Phosphoserine. Position 40 is an N6-succinyllysine (K40). S49 carries the phosphoserine modification. Residue H58 participates in O2 binding. H87 contributes to the heme b binding site. S102 bears the Phosphoserine mark. A Phosphothreonine modification is found at T108. S124 bears the Phosphoserine mark. T134 and T137 each carry phosphothreonine. Phosphoserine is present on S138.

This sequence belongs to the globin family. In terms of assembly, heterotetramer of two alpha chains and two beta chains. In terms of tissue distribution, red blood cells.

Functionally, involved in oxygen transport from the lung to the various peripheral tissues. The protein is Hemoglobin subunit alpha of Tamias merriami (Merriam's chipmunk).